A 1453-amino-acid chain; its full sequence is ABC transporter G family member 34 (1453 aa).

Residues M1–R24 are disordered. An ABC transporter 1 domain is found at L173–E446. ATP is bound at residue G206–T213. One can recognise an ABC transmembrane type-2 1 domain in the interval D524–F737. The next 6 helical transmembrane spans lie at F542 to Y562, L582 to M602, F621 to I641, L661 to L681, I687 to I707, and F773 to I793. Residues L852–G1105 enclose the ABC transporter 2 domain. G897–T904 is an ATP binding site. The ABC transmembrane type-2 2 domain maps to T1177–V1391. 7 consecutive transmembrane segments (helical) span residues Y1196–W1216, N1230–V1250, I1289–V1309, F1311–M1331, I1341–I1361, I1366–I1386, and F1422–A1442.

The protein belongs to the ABC transporter superfamily. ABCG family. PDR (TC 3.A.1.205) subfamily. As to expression, expressed in roots at low levels.

The protein resides in the membrane. May be a general defense protein. The polypeptide is ABC transporter G family member 34 (ABCG34) (Arabidopsis thaliana (Mouse-ear cress)).